We begin with the raw amino-acid sequence, 133 residues long: 6,7-dimethyl-8-ribityllumazine synthase (133 aa).

Residues F11, 43 to 45 (AYD), and 67 to 69 (AIV) contribute to the 5-amino-6-(D-ribitylamino)uracil site. 72–73 (DT) contributes to the (2S)-2-hydroxy-3-oxobutyl phosphate binding site. H75 (proton donor) is an active-site residue. F100 contacts 5-amino-6-(D-ribitylamino)uracil. Position 115 (R115) interacts with (2S)-2-hydroxy-3-oxobutyl phosphate.

The protein belongs to the DMRL synthase family.

The enzyme catalyses (2S)-2-hydroxy-3-oxobutyl phosphate + 5-amino-6-(D-ribitylamino)uracil = 6,7-dimethyl-8-(1-D-ribityl)lumazine + phosphate + 2 H2O + H(+). The protein operates within cofactor biosynthesis; riboflavin biosynthesis; riboflavin from 2-hydroxy-3-oxobutyl phosphate and 5-amino-6-(D-ribitylamino)uracil: step 1/2. In terms of biological role, catalyzes the formation of 6,7-dimethyl-8-ribityllumazine by condensation of 5-amino-6-(D-ribitylamino)uracil with 3,4-dihydroxy-2-butanone 4-phosphate. This is the penultimate step in the biosynthesis of riboflavin. The polypeptide is 6,7-dimethyl-8-ribityllumazine synthase (Halobacterium salinarum (strain ATCC 29341 / DSM 671 / R1)).